A 353-amino-acid chain; its full sequence is UDP-N-acetylglucosamine--N-acetylmuramyl-(pentapeptide) pyrophosphoryl-undecaprenol N-acetylglucosamine transferase (353 aa).

Residues 10-12 (TGG), Asn-124, Ser-183, and Gln-283 each bind UDP-N-acetyl-alpha-D-glucosamine.

This sequence belongs to the glycosyltransferase 28 family. MurG subfamily.

It is found in the cell inner membrane. It carries out the reaction di-trans,octa-cis-undecaprenyl diphospho-N-acetyl-alpha-D-muramoyl-L-alanyl-D-glutamyl-meso-2,6-diaminopimeloyl-D-alanyl-D-alanine + UDP-N-acetyl-alpha-D-glucosamine = di-trans,octa-cis-undecaprenyl diphospho-[N-acetyl-alpha-D-glucosaminyl-(1-&gt;4)]-N-acetyl-alpha-D-muramoyl-L-alanyl-D-glutamyl-meso-2,6-diaminopimeloyl-D-alanyl-D-alanine + UDP + H(+). Its pathway is cell wall biogenesis; peptidoglycan biosynthesis. Functionally, cell wall formation. Catalyzes the transfer of a GlcNAc subunit on undecaprenyl-pyrophosphoryl-MurNAc-pentapeptide (lipid intermediate I) to form undecaprenyl-pyrophosphoryl-MurNAc-(pentapeptide)GlcNAc (lipid intermediate II). The chain is UDP-N-acetylglucosamine--N-acetylmuramyl-(pentapeptide) pyrophosphoryl-undecaprenol N-acetylglucosamine transferase from Helicobacter acinonychis (strain Sheeba).